The primary structure comprises 275 residues: 2,3,4,5-tetrahydropyridine-2,6-dicarboxylate N-succinyltransferase (275 aa).

Substrate-binding residues include arginine 106 and aspartate 143.

The protein belongs to the transferase hexapeptide repeat family. As to quaternary structure, homotrimer.

The protein localises to the cytoplasm. It catalyses the reaction (S)-2,3,4,5-tetrahydrodipicolinate + succinyl-CoA + H2O = (S)-2-succinylamino-6-oxoheptanedioate + CoA. The protein operates within amino-acid biosynthesis; L-lysine biosynthesis via DAP pathway; LL-2,6-diaminopimelate from (S)-tetrahydrodipicolinate (succinylase route): step 1/3. The sequence is that of 2,3,4,5-tetrahydropyridine-2,6-dicarboxylate N-succinyltransferase from Rickettsia bellii (strain RML369-C).